Reading from the N-terminus, the 635-residue chain is 1-deoxy-D-xylulose-5-phosphate synthase (635 aa).

Residues histidine 72 and 113-115 (GHA) contribute to the thiamine diphosphate site. Aspartate 144 lines the Mg(2+) pocket. Residues 145–146 (GA), asparagine 174, tyrosine 286, and glutamate 369 each bind thiamine diphosphate. Residue asparagine 174 coordinates Mg(2+).

The protein belongs to the transketolase family. DXPS subfamily. Homodimer. Mg(2+) serves as cofactor. It depends on thiamine diphosphate as a cofactor.

The catalysed reaction is D-glyceraldehyde 3-phosphate + pyruvate + H(+) = 1-deoxy-D-xylulose 5-phosphate + CO2. Its pathway is metabolic intermediate biosynthesis; 1-deoxy-D-xylulose 5-phosphate biosynthesis; 1-deoxy-D-xylulose 5-phosphate from D-glyceraldehyde 3-phosphate and pyruvate: step 1/1. Its function is as follows. Catalyzes the acyloin condensation reaction between C atoms 2 and 3 of pyruvate and glyceraldehyde 3-phosphate to yield 1-deoxy-D-xylulose-5-phosphate (DXP). In Gloeothece citriformis (strain PCC 7424) (Cyanothece sp. (strain PCC 7424)), this protein is 1-deoxy-D-xylulose-5-phosphate synthase.